The following is a 111-amino-acid chain: uncharacterized protein (111 aa).

It is found in the mitochondrion. This is an uncharacterized protein from Arabidopsis thaliana (Mouse-ear cress).